The chain runs to 213 residues: ATP synthase peripheral stalk subunit OSCP, mitochondrial (213 aa).

A mitochondrion-targeting transit peptide spans 1–23; that stretch reads MASQAVSGLSRQVRCFSTSVVRP. The SIFI-degron motif lies at 5 to 23; it reads AVSGLSRQVRCFSTSVVRP. 4 positions are modified to N6-acetyllysine: Lys-54, Lys-60, Lys-70, and Lys-73. The residue at position 90 (Lys-90) is an N6-succinyllysine. An N6-acetyllysine; alternate mark is found at Lys-100, Lys-158, and Lys-162. N6-succinyllysine; alternate occurs at positions 100, 158, and 162. An N6-acetyllysine mark is found at Lys-172, Lys-176, and Lys-192. Lys-199 is modified (N6-succinyllysine).

It belongs to the ATPase delta chain family. In terms of assembly, component of the ATP synthase complex composed at least of ATP5F1A/subunit alpha, ATP5F1B/subunit beta, ATP5MC1/subunit c (homooctomer), MT-ATP6/subunit a, MT-ATP8/subunit 8, ATP5ME/subunit e, ATP5MF/subunit f, ATP5MG/subunit g, ATP5MK/subunit k, ATP5MJ/subunit j, ATP5F1C/subunit gamma, ATP5F1D/subunit delta, ATP5F1E/subunit epsilon, ATP5PF/subunit F6, ATP5PB/subunit b, ATP5PD/subunit d, ATP5PO/subunit OSCP. ATP synthase complex consists of a soluble F(1) head domain (subunits alpha(3) and beta(3)) - the catalytic core - and a membrane F(0) domain - the membrane proton channel (subunits c, a, 8, e, f, g, k and j). These two domains are linked by a central stalk (subunits gamma, delta, and epsilon) rotating inside the F1 region and a stationary peripheral stalk (subunits F6, b, d, and OSCP). Acetylation at Lys-162 decreases ATP production. Deacetylated by SIRT3. In terms of processing, in response to mitochondrial stress, the precursor protein is ubiquitinated by the SIFI complex in the cytoplasm before mitochondrial import, leading to its degradation. Within the SIFI complex, UBR4 initiates ubiquitin chain that are further elongated or branched by KCMF1.

It is found in the mitochondrion. The protein localises to the mitochondrion inner membrane. In terms of biological role, subunit OSCP, of the mitochondrial membrane ATP synthase complex (F(1)F(0) ATP synthase or Complex V) that produces ATP from ADP in the presence of a proton gradient across the membrane which is generated by electron transport complexes of the respiratory chain. ATP synthase complex consist of a soluble F(1) head domain - the catalytic core - and a membrane F(1) domain - the membrane proton channel. These two domains are linked by a central stalk rotating inside the F(1) region and a stationary peripheral stalk. During catalysis, ATP synthesis in the catalytic domain of F(1) is coupled via a rotary mechanism of the central stalk subunits to proton translocation. In vivo, can only synthesize ATP although its ATP hydrolase activity can be activated artificially in vitro. Part of the complex F(0) domain. Part of the complex F(0) domain and the peripheric stalk, which acts as a stator to hold the catalytic alpha(3)beta(3) subcomplex and subunit a/ATP6 static relative to the rotary elements. In Sus scrofa (Pig), this protein is ATP synthase peripheral stalk subunit OSCP, mitochondrial.